Reading from the N-terminus, the 320-residue chain is Endolytic peptidoglycan transglycosylase RlpA (320 aa).

This sequence belongs to the RlpA family.

Functionally, lytic transglycosylase with a strong preference for naked glycan strands that lack stem peptides. This Rickettsia typhi (strain ATCC VR-144 / Wilmington) protein is Endolytic peptidoglycan transglycosylase RlpA.